The chain runs to 124 residues: Fluoride-specific ion channel FluC (124 aa).

4 consecutive transmembrane segments (helical) span residues 1–21 (MFNLLLVVVGGGIGAGIRHLT), 35–55 (WGTMAINIVGSFAMGLFIAIL), 66–86 (LFVATGIFGGFTTFSAFSLDF), and 99–119 (FGYALASVIGAIIALFLGLWL). Glycine 74 and threonine 77 together coordinate Na(+).

It belongs to the fluoride channel Fluc/FEX (TC 1.A.43) family.

It is found in the cell inner membrane. It carries out the reaction fluoride(in) = fluoride(out). Na(+) is not transported, but it plays an essential structural role and its presence is essential for fluoride channel function. Fluoride-specific ion channel. Important for reducing fluoride concentration in the cell, thus reducing its toxicity. This Mesorhizobium japonicum (strain LMG 29417 / CECT 9101 / MAFF 303099) (Mesorhizobium loti (strain MAFF 303099)) protein is Fluoride-specific ion channel FluC.